A 313-amino-acid polypeptide reads, in one-letter code: Porphobilinogen deaminase (313 aa).

Residue Cys-242 is modified to S-(dipyrrolylmethanemethyl)cysteine.

It belongs to the HMBS family. Monomer. Dipyrromethane serves as cofactor.

The catalysed reaction is 4 porphobilinogen + H2O = hydroxymethylbilane + 4 NH4(+). The protein operates within porphyrin-containing compound metabolism; protoporphyrin-IX biosynthesis; coproporphyrinogen-III from 5-aminolevulinate: step 2/4. Its function is as follows. Tetrapolymerization of the monopyrrole PBG into the hydroxymethylbilane pre-uroporphyrinogen in several discrete steps. The protein is Porphobilinogen deaminase of Pseudomonas putida (strain ATCC 700007 / DSM 6899 / JCM 31910 / BCRC 17059 / LMG 24140 / F1).